The chain runs to 430 residues: Trigger factor (430 aa).

The PPIase FKBP-type domain occupies 163 to 248 (GNIAIIDFKG…IKDIKVKELP (86 aa)).

It belongs to the FKBP-type PPIase family. Tig subfamily.

It is found in the cytoplasm. The catalysed reaction is [protein]-peptidylproline (omega=180) = [protein]-peptidylproline (omega=0). Its function is as follows. Involved in protein export. Acts as a chaperone by maintaining the newly synthesized protein in an open conformation. Functions as a peptidyl-prolyl cis-trans isomerase. This is Trigger factor from Clostridium botulinum (strain Langeland / NCTC 10281 / Type F).